We begin with the raw amino-acid sequence, 114 residues long: DNA-directed RNA polymerases II, IV and V subunit 9B (114 aa).

Residues C7, C10, C29, C32, C76, C79, C103, and C108 each coordinate Zn(2+). The segment at 72–113 adopts a TFIIS-type zinc-finger fold; sequence KAVRCAKCQHGEAVFFQATARGEEGMTLFFVCCNPNCSHRWR.

The protein belongs to the archaeal RpoM/eukaryotic RPA12/RPB9/RPC11 RNA polymerase family. Component of the RNA polymerase II, IV and V complexes. Interacts with NRPD1.

The protein resides in the nucleus. It localises to the nucleolus. Functionally, DNA-dependent RNA polymerase catalyzes the transcription of DNA into RNA using the four ribonucleoside triphosphates as substrates. Component of RNA polymerase II which synthesizes mRNA precursors and many functional non-coding RNAs. Pol II is the central component of the basal RNA polymerase II transcription machinery. It is composed of mobile elements that move relative to each other. Component of RNA polymerases IV and V which mediate short-interfering RNAs (siRNA) accumulation and subsequent RNA-directed DNA methylation-dependent (RdDM) transcriptional gene silencing (TGS) of endogenous repeated sequences, including transposable elements. Required for RNA silencing. The protein is DNA-directed RNA polymerases II, IV and V subunit 9B (NRPB9B) of Arabidopsis thaliana (Mouse-ear cress).